Consider the following 131-residue polypeptide: Small ribosomal subunit protein uS11 (131 aa).

The protein belongs to the universal ribosomal protein uS11 family. Part of the 30S ribosomal subunit. Interacts with proteins S7 and S18. Binds to IF-3. Interacts with VmlR. Interacts with BrxC.

Its function is as follows. Located on the platform of the 30S subunit, it bridges several disparate RNA helices of the 16S rRNA. Forms part of the Shine-Dalgarno cleft in the 70S ribosome. The sequence is that of Small ribosomal subunit protein uS11 from Bacillus subtilis (strain 168).